Reading from the N-terminus, the 505-residue chain is E3 SUMO-protein ligase PIAS4-A (505 aa).

The SAP domain maps to 12–46; sequence VKSFRVSDLQTLLASMGRSKSGLKQDLVGRALRLV. Positions 20 to 24 match the LXXLL motif motif; that stretch reads LQTLL. Residue Lys-35 forms a Glycyl lysine isopeptide (Lys-Gly) (interchain with G-Cter in SUMO); alternate linkage. Residue Lys-35 forms a Glycyl lysine isopeptide (Lys-Gly) (interchain with G-Cter in SUMO2); alternate linkage. Residues Lys-56 and Lys-68 each participate in a glycyl lysine isopeptide (Lys-Gly) (interchain with G-Cter in SUMO2) cross-link. In terms of domain architecture, PINIT spans 104-264; sequence GIPKPAPPPA…SVAVYLVRVF (161 aa). An SP-RING-type zinc finger spans residues 296–381; it reads PESEIATTGL…LKETPEDVEE (86 aa). Residues Cys-327, His-329, Cys-350, and Cys-353 each coordinate Zn(2+). Residues 374 to 505 are required for nuclear localization; that stretch reads ETPEDVEEIE…DYDKDLVTAY (132 aa). The span at 395–407 shows a compositional bias: basic and acidic residues; sequence DDKEKERERENSR. A disordered region spans residues 395–505; the sequence is DDKEKERERE…DYDKDLVTAY (111 aa). A compositionally biased stretch (gly residues) spans 437-457; that stretch reads SGSGGASAGTGSTSGGSGGGT. The span at 462–485 shows a compositional bias: acidic residues; the sequence is TLDDSSEEEGGGGAEDSEETDDSQ. The span at 493–505 shows a compositional bias: basic and acidic residues; it reads GRYDYDKDLVTAY.

This sequence belongs to the PIAS family. Sumoylated. Lys-35 is the main site of sumoylation. As to expression, highly expressed in spleen, liver, and brain. Expressed at lower levels in heart, intestine, kidney, gill, skin, and muscle.

It is found in the nucleus. It carries out the reaction S-ubiquitinyl-[E2 ubiquitin-conjugating enzyme]-L-cysteine + [acceptor protein]-L-lysine = [E2 ubiquitin-conjugating enzyme]-L-cysteine + N(6)-ubiquitinyl-[acceptor protein]-L-lysine.. It participates in protein modification; protein sumoylation. Functionally, functions as an E3-type small ubiquitin-like modifier (SUMO) ligase. May play a role as a transcriptional coregulator in various cellular pathways. Catalyzes conjugation of SUMO2 to KAT5 in response to DNA damage, facilitating repair of DNA double-strand breaks (DSBs) via homologous recombination (HR). Mediates sumoylation of PARP1 in response to PARP1 trapping to chromatin. Negatively regulates induction of interferon phi 1 (ifnphi1) mediated by mavs and ticam1/trif. Also inhibits ifnphi1-mediated activation of the interferon-stimulated genes (ISGs) pkz and cd40, and to a lesser extent rsad2 and isg15. May inhibit ticam1/trif-mediated activation of NF-kappa-B. The protein is E3 SUMO-protein ligase PIAS4-A of Danio rerio (Zebrafish).